A 61-amino-acid polypeptide reads, in one-letter code: Large ribosomal subunit protein bL32 (61 aa).

Positions 1–16 are enriched in basic residues; that stretch reads MPTPKKKTSRSKRDMR. Residues 1 to 47 are disordered; sequence MPTPKKKTSRSKRDMRRSHDGLTAPAIAVEKKTGELVRPHRAHKGAD. The segment covering 29-38 has biased composition (basic and acidic residues); the sequence is VEKKTGELVR.

This sequence belongs to the bacterial ribosomal protein bL32 family.

The chain is Large ribosomal subunit protein bL32 from Bdellovibrio bacteriovorus (strain ATCC 15356 / DSM 50701 / NCIMB 9529 / HD100).